Reading from the N-terminus, the 857-residue chain is Bifunctional levopimaradiene synthase, chloroplastic (857 aa).

A chloroplast-targeting transit peptide spans 1–33 (MALPSSSLSSQIHTGATTQCIPHFHGSLNAGTS). A substrate-binding site is contributed by Lys-257. Mg(2+)-binding residues include Asp-390 and Asp-392. The DXDD motif motif lies at 390 to 393 (DIDD). Position 477 (Lys-477) interacts with substrate. Asp-609, Asp-613, Asn-753, Thr-757, and Glu-761 together coordinate Mg(2+). The DDXXD motif motif lies at 609–613 (DDLYD).

This sequence belongs to the terpene synthase family. Tpsd subfamily. Requires Mg(2+) as cofactor.

Its subcellular location is the plastid. The protein resides in the chloroplast. It carries out the reaction (2E,6E,10E)-geranylgeranyl diphosphate = (+)-copalyl diphosphate. It catalyses the reaction (+)-copalyl diphosphate = abieta-7,13-diene + diphosphate. The enzyme catalyses (+)-copalyl diphosphate = abieta-8(14),12-diene + diphosphate. The catalysed reaction is (+)-copalyl diphosphate = neoabietadiene + diphosphate. It participates in terpene metabolism; oleoresin biosynthesis. Involved in defensive oleoresin formation in conifers in response to insect attack or other injury. Involved in diterpene (C20) olefins biosynthesis. Bifunctional enzyme that catalyzes two sequential cyclizations of geranylgeranyl diphosphate (GGPP) to levopimaradiene. Levopimaradiene is the major products of the enzyme with abietadiene and neoabietadiene. No activity with farnesyl diphosphate (FPP) as substrate. The sequence is that of Bifunctional levopimaradiene synthase, chloroplastic from Pinus contorta (Shore pine).